A 139-amino-acid polypeptide reads, in one-letter code: Pre-hexon-linking protein VIII (139 aa).

The propeptide occupies 35-69 (GAAGDYFKSPTSARTLIPLTASCLRPDGVFQLGGG).

It belongs to the adenoviridae hexon-linking protein family. Interacts with the peripentonal hexons as well as the hexons in the facets. Part of a complex composed of the core-capsid bridging protein, the endosome lysis protein VI and the hexon-linking protein VIII; these interactions bridge the virus core to the capsid. Cleaved by the viral protease during virion maturation. May cause the middle segment to be shed from the capsid.

The protein resides in the host nucleus. The protein localises to the virion. Structural component of the virion that acts as a cement protein on the capsid interior and which glue the peripentonal hexons and group-of-nine hexons together. This Bovine adenovirus B serotype 3 (BAdV-3) protein is Pre-hexon-linking protein VIII.